A 144-amino-acid polypeptide reads, in one-letter code: Deoxyuridine 5'-triphosphate nucleotidohydrolase (144 aa).

Substrate contacts are provided by residues 63–65 (RSG), Asn76, and 80–82 (TID).

Belongs to the dUTPase family. The cofactor is Mg(2+).

It carries out the reaction dUTP + H2O = dUMP + diphosphate + H(+). The protein operates within pyrimidine metabolism; dUMP biosynthesis; dUMP from dCTP (dUTP route): step 2/2. Functionally, this enzyme is involved in nucleotide metabolism: it produces dUMP, the immediate precursor of thymidine nucleotides and it decreases the intracellular concentration of dUTP so that uracil cannot be incorporated into DNA. The polypeptide is Deoxyuridine 5'-triphosphate nucleotidohydrolase (Porphyromonas gingivalis (strain ATCC BAA-308 / W83)).